A 332-amino-acid polypeptide reads, in one-letter code: MNRPLGIIGAGAWGTALAIAAGHAGHPVRLWGRDTAAVQAMARDRVNRRNLPDCPLPDPVQPQPDLTALVAECDDLLLVVPSRAFESMLHTLAPLIERRHRLGWATKGLDAASGGLLSQVVQRVLKPLPPLAVLSGPSFAAEVGRGLPTAVTVAATDQGFASDLADAFRYERFRVYTSTDLVGVQLGGAVKNVLAIATGVADGLGFGANARAALITRGLAETRRLSEALGADPDTLTGLAGMGDLILTCTDDQSRNRRLGLALGRGEDLDEAVEAIGTVEGVRTADELHRLATQAGVEMPICEQVHLRLAGRVSTREAVENLLLRPGGRQEQ.

Residues W13, R33, and K107 each contribute to the NADPH site. Sn-glycerol 3-phosphate contacts are provided by K107, G136, and S138. A140 provides a ligand contact to NADPH. K191, D244, S254, R255, and N256 together coordinate sn-glycerol 3-phosphate. The active-site Proton acceptor is the K191. R255 serves as a coordination point for NADPH. Residue E280 participates in NADPH binding.

Belongs to the NAD-dependent glycerol-3-phosphate dehydrogenase family.

Its subcellular location is the cytoplasm. The catalysed reaction is sn-glycerol 3-phosphate + NAD(+) = dihydroxyacetone phosphate + NADH + H(+). It carries out the reaction sn-glycerol 3-phosphate + NADP(+) = dihydroxyacetone phosphate + NADPH + H(+). It participates in membrane lipid metabolism; glycerophospholipid metabolism. In terms of biological role, catalyzes the reduction of the glycolytic intermediate dihydroxyacetone phosphate (DHAP) to sn-glycerol 3-phosphate (G3P), the key precursor for phospholipid synthesis. This is Glycerol-3-phosphate dehydrogenase [NAD(P)+] from Alkalilimnicola ehrlichii (strain ATCC BAA-1101 / DSM 17681 / MLHE-1).